A 288-amino-acid polypeptide reads, in one-letter code: Anthranilate synthase beta subunit 1, chloroplastic (288 aa).

The N-terminal 58 residues, 1–58 (MACSHLAAAAAAASPAAARSPAASSAATASAFARLSATPRVASGGLAVRGQRGVAAVV), are a transit peptide targeting the chloroplast. The Glutamine amidotransferase type-1 domain occupies 83–282 (PIIVIDNYDS…VRFIEELEKQ (200 aa)). Residue 134–136 (GPG) participates in L-glutamine binding. Catalysis depends on Cys161, which acts as the Nucleophile. L-glutamine is bound by residues Gln165 and 215–216 (SL). Residues His256 and Glu258 contribute to the active site.

As to quaternary structure, heterotetramer consisting of two non-identical subunits: a beta subunit and a large alpha subunit. Expressed in roots and leaves.

It is found in the plastid. Its subcellular location is the chloroplast. It catalyses the reaction chorismate + L-glutamine = anthranilate + pyruvate + L-glutamate + H(+). It functions in the pathway amino-acid biosynthesis; L-tryptophan biosynthesis; L-tryptophan from chorismate: step 1/5. Functionally, part of a heterotetrameric complex that catalyzes the two-step biosynthesis of anthranilate, an intermediate in the biosynthesis of L-tryptophan. In the first step, the glutamine-binding beta subunit of anthranilate synthase (AS) provides the glutamine amidotransferase activity which generates ammonia as a substrate that, along with chorismate, is used in the second step, catalyzed by the large alpha subunit of AS to produce anthranilate. The sequence is that of Anthranilate synthase beta subunit 1, chloroplastic from Oryza sativa subsp. japonica (Rice).